A 638-amino-acid polypeptide reads, in one-letter code: Threonine--tRNA ligase 2 (638 aa).

Positions 1 to 64 (MSKHVHIQLP…EEDAELSIVT (64 aa)) constitute a TGS domain. Residues 245–535 (DHRKLGKQLG…LIEHYGGAFP (291 aa)) are catalytic. Zn(2+)-binding residues include cysteine 336, histidine 387, and histidine 512.

This sequence belongs to the class-II aminoacyl-tRNA synthetase family. As to quaternary structure, homodimer. The cofactor is Zn(2+).

The protein localises to the cytoplasm. It catalyses the reaction tRNA(Thr) + L-threonine + ATP = L-threonyl-tRNA(Thr) + AMP + diphosphate + H(+). Catalyzes the attachment of threonine to tRNA(Thr) in a two-step reaction: L-threonine is first activated by ATP to form Thr-AMP and then transferred to the acceptor end of tRNA(Thr). Also edits incorrectly charged L-seryl-tRNA(Thr). The sequence is that of Threonine--tRNA ligase 2 (thrZ) from Bacillus subtilis (strain 168).